Here is a 246-residue protein sequence, read N- to C-terminus: Predicted GPI-anchored protein 33 (246 aa).

The first 16 residues, 1 to 16, serve as a signal peptide directing secretion; that stretch reads MRGIILLSFVLTSCLA. N-linked (GlcNAc...) asparagine glycosylation occurs at N214. The GPI-anchor amidated asparagine moiety is linked to residue N219. The propeptide at 220–246 is removed in mature form; it reads AAGVYSTNSVLVFVSICIGFIGGSLGI.

It localises to the cell membrane. The protein is Predicted GPI-anchored protein 33 (PGA33) of Candida albicans (strain SC5314 / ATCC MYA-2876) (Yeast).